The sequence spans 208 residues: Nitrate/nitrite response regulator protein homolog (208 aa).

The Response regulatory domain occupies 6–122 (KVLLIDDHPL…TLLEQIKRIA (117 aa)). A 4-aspartylphosphate modification is found at Asp-57. The HTH luxR-type domain occupies 142–207 (EDNPLDSLTD…AATVLFFEQN (66 aa)). A DNA-binding region (H-T-H motif) is located at residues 166 to 185 (NKQIAAQLFISEETVKVHIR).

Could activate the expression of a formate dehydrogenase operon and could repress the transcription of the fumarate reductase (frdABCD) operon. This Haemophilus influenzae (strain ATCC 51907 / DSM 11121 / KW20 / Rd) protein is Nitrate/nitrite response regulator protein homolog (narP).